Here is a 411-residue protein sequence, read N- to C-terminus: Dihydrofolate synthase/folylpolyglutamate synthase (411 aa).

G53 to T56 is a binding site for ATP. Mg(2+) is bound at residue S77. Residues T116–E119 and L147–A149 contribute to the 7,8-dihydropteroate site. H167 provides a ligand contact to Mg(2+). 2 residues coordinate ATP: R283 and D296.

Belongs to the folylpolyglutamate synthase family. Monomer. It depends on Mg(2+) as a cofactor.

It carries out the reaction 7,8-dihydropteroate + L-glutamate + ATP = 7,8-dihydrofolate + ADP + phosphate + H(+). The catalysed reaction is (6S)-5,6,7,8-tetrahydrofolyl-(gamma-L-Glu)(n) + L-glutamate + ATP = (6S)-5,6,7,8-tetrahydrofolyl-(gamma-L-Glu)(n+1) + ADP + phosphate + H(+). It catalyses the reaction 10-formyltetrahydrofolyl-(gamma-L-Glu)(n) + L-glutamate + ATP = 10-formyltetrahydrofolyl-(gamma-L-Glu)(n+1) + ADP + phosphate + H(+). The enzyme catalyses (6R)-5,10-methylenetetrahydrofolyl-(gamma-L-Glu)(n) + L-glutamate + ATP = (6R)-5,10-methylenetetrahydrofolyl-(gamma-L-Glu)(n+1) + ADP + phosphate + H(+). Its pathway is cofactor biosynthesis; tetrahydrofolate biosynthesis; 7,8-dihydrofolate from 2-amino-4-hydroxy-6-hydroxymethyl-7,8-dihydropteridine diphosphate and 4-aminobenzoate: step 2/2. It participates in cofactor biosynthesis; tetrahydrofolylpolyglutamate biosynthesis. Functions in two distinct reactions of the de novo folate biosynthetic pathway. Catalyzes the addition of a glutamate residue to dihydropteroate (7,8-dihydropteroate or H2Pte) to form dihydrofolate (7,8-dihydrofolate monoglutamate or H2Pte-Glu). Also catalyzes successive additions of L-glutamate to tetrahydrofolate or 10-formyltetrahydrofolate or 5,10-methylenetetrahydrofolate, leading to folylpolyglutamate derivatives. The polypeptide is Dihydrofolate synthase/folylpolyglutamate synthase (folC) (Buchnera aphidicola subsp. Acyrthosiphon pisum (strain APS) (Acyrthosiphon pisum symbiotic bacterium)).